The following is a 37-amino-acid chain: Large ribosomal subunit protein bL36c (37 aa).

It belongs to the bacterial ribosomal protein bL36 family.

Its subcellular location is the plastid. It localises to the chloroplast. This is Large ribosomal subunit protein bL36c from Phaseolus angularis (Azuki bean).